The sequence spans 100 residues: Aspartyl/glutamyl-tRNA(Asn/Gln) amidotransferase subunit C (100 aa).

This sequence belongs to the GatC family. In terms of assembly, heterotrimer of A, B and C subunits.

It carries out the reaction L-glutamyl-tRNA(Gln) + L-glutamine + ATP + H2O = L-glutaminyl-tRNA(Gln) + L-glutamate + ADP + phosphate + H(+). The enzyme catalyses L-aspartyl-tRNA(Asn) + L-glutamine + ATP + H2O = L-asparaginyl-tRNA(Asn) + L-glutamate + ADP + phosphate + 2 H(+). In terms of biological role, allows the formation of correctly charged Asn-tRNA(Asn) or Gln-tRNA(Gln) through the transamidation of misacylated Asp-tRNA(Asn) or Glu-tRNA(Gln) in organisms which lack either or both of asparaginyl-tRNA or glutaminyl-tRNA synthetases. The reaction takes place in the presence of glutamine and ATP through an activated phospho-Asp-tRNA(Asn) or phospho-Glu-tRNA(Gln). This chain is Aspartyl/glutamyl-tRNA(Asn/Gln) amidotransferase subunit C, found in Streptococcus pneumoniae (strain Hungary19A-6).